The primary structure comprises 192 residues: Probable GTP-binding protein EngB (192 aa).

The 171-residue stretch at 22 to 192 (SLPEIVFVGR…LLEQLENYTG (171 aa)) folds into the EngB-type G domain. GTP contacts are provided by residues 30-37 (GRSNVGKS), 57-61 (GKTQL), 75-78 (DLPG), 142-145 (TKYD), and 172-174 (YSA). Mg(2+) contacts are provided by Ser37 and Thr59.

It belongs to the TRAFAC class TrmE-Era-EngA-EngB-Septin-like GTPase superfamily. EngB GTPase family. Mg(2+) serves as cofactor.

In terms of biological role, necessary for normal cell division and for the maintenance of normal septation. The protein is Probable GTP-binding protein EngB of Prosthecochloris aestuarii (strain DSM 271 / SK 413).